The primary structure comprises 132 residues: Fatty acid-binding protein type 3 (132 aa).

It belongs to the calycin superfamily. Fatty-acid binding protein (FABP) family.

This is Fatty acid-binding protein type 3 from Fasciola hepatica (Liver fluke).